We begin with the raw amino-acid sequence, 352 residues long: tRNA-specific 2-thiouridylase MnmA (352 aa).

ATP contacts are provided by residues 9-16 (ALSGGVDS) and Met35. The active-site Nucleophile is the Cys96. Cysteines 96 and 192 form a disulfide. Position 120 (Gly120) interacts with ATP. The segment at 142 to 144 (KDQ) is interaction with tRNA. Catalysis depends on Cys192, which acts as the Cysteine persulfide intermediate. The interaction with tRNA stretch occupies residues 299–300 (RY).

It belongs to the MnmA/TRMU family.

Its subcellular location is the cytoplasm. The catalysed reaction is S-sulfanyl-L-cysteinyl-[protein] + uridine(34) in tRNA + AH2 + ATP = 2-thiouridine(34) in tRNA + L-cysteinyl-[protein] + A + AMP + diphosphate + H(+). In terms of biological role, catalyzes the 2-thiolation of uridine at the wobble position (U34) of tRNA, leading to the formation of s(2)U34. This is tRNA-specific 2-thiouridylase MnmA from Acidithiobacillus ferrooxidans (strain ATCC 23270 / DSM 14882 / CIP 104768 / NCIMB 8455) (Ferrobacillus ferrooxidans (strain ATCC 23270)).